The chain runs to 249 residues: Long form salivary protein D7L (249 aa).

The N-terminal stretch at 1–19 is a signal peptide; sequence MNAVITSLVFISLVGVGYS. 2 disulfides stabilise this stretch: C36/C66 and C62/C112. Position 49 (W49) interacts with thromboxane A2. W52 serves as a coordination point for leukotriene C4. Y63 serves as a coordination point for thromboxane A2. Residues G136 and K154 each coordinate leukotriene C4. Residue K154 participates in thromboxane A2 binding. Cystine bridges form between C162–C178, C174–C221, and C211–C230.

This sequence belongs to the PBP/GOBP family.

Its subcellular location is the secreted. Its function is as follows. Modulates blood feeding of female sandflies on vertebrate species by binding and sequestering different mediators involved in the host response. Binds leukotriene C4, leukotriene D4, leukotriene E4 and U-46619, a stable analog of thromboxane A2. Does not bind histamine or serotonin. Inhibits platelet aggregation induced by low concentrations of collagen in thromboxane A2-dependent manner. The polypeptide is Long form salivary protein D7L (Phlebotomus duboscqi (Sandfly)).